We begin with the raw amino-acid sequence, 275 residues long: Large ribosomal subunit protein uL2 (275 aa).

A disordered region spans residues 212-275 (NRHRGIRPQT…DKLIISRRKK (64 aa)). A compositionally biased stretch (basic residues) spans 257–275 (YKTRRKKPSDKLIISRRKK).

Belongs to the universal ribosomal protein uL2 family. As to quaternary structure, part of the 50S ribosomal subunit. Forms a bridge to the 30S subunit in the 70S ribosome.

Functionally, one of the primary rRNA binding proteins. Required for association of the 30S and 50S subunits to form the 70S ribosome, for tRNA binding and peptide bond formation. It has been suggested to have peptidyltransferase activity; this is somewhat controversial. Makes several contacts with the 16S rRNA in the 70S ribosome. In Nitratiruptor sp. (strain SB155-2), this protein is Large ribosomal subunit protein uL2.